The following is a 2507-amino-acid chain: Putative neurobeachin homolog (2507 aa).

3 disordered regions span residues 1-109 (MEIS…PPLP), 1307-1377 (PSSP…DGGR), and 1629-1649 (SRHEEANLPEGEKNEEPEISE). A compositionally biased stretch (acidic residues) spans 24 to 37 (PVEEGEEVNDEESN). Polar residues predominate over residues 1317–1340 (TTQKQENSENVNSETSPENGSNGK). Over residues 1360–1372 (DGEEEENGEEGQG) the composition is skewed to acidic residues. The BEACH-type PH domain maps to 1690 to 1798 (PSSQSACFST…AVKKVVYQLP (109 aa)). One can recognise a BEACH domain in the interval 1817 to 2106 (MTPRQLFKHS…QLLTEAHPPR (290 aa)). WD repeat units lie at residues 2265 to 2308 (GHGD…GFIA), 2326 to 2365 (GHEASISALCVSAEHGLVVSGCEDGVILIHTTSSDLLRRI), 2405 to 2444 (LVDDKIECVTVTRDGEFAVTGAVNGRINIWRMFPLTKLYT), and 2447 to 2486 (PLNSAVRSVAVVASHRFILGGLDSGAIVVFNADFNRWHYE).

It belongs to the WD repeat neurobeachin family. As to quaternary structure, interacts with RII subunit of PKA. In terms of tissue distribution, expressed in vulval precursor cells and rectal epithelia in L2 and L3 larvae. In L4 larvae, expression is seen in intestinal epithelial cells.

It localises to the cytoplasm. The protein localises to the membrane. It is found in the nucleus. Binds to type II regulatory subunits of protein kinase A and anchors/targets them to the membrane. May anchor the kinase to cytoskeletal and/or organelle-associated proteins. Regulates endosomal traffic in polarized epithelial cells such as the vulval precursor cells and intestinal cells. Thought to act as a negative regulator of lin-12 activity in vulval precursor cells. May have a role in the internalization process from basolateral surface of polarized epithelial cells. The chain is Putative neurobeachin homolog (sel-2) from Caenorhabditis elegans.